Reading from the N-terminus, the 461-residue chain is D-phenylhydantoinase (461 aa).

The a divalent metal cation site is built by H59, H61, and K151. K151 is subject to N6-carboxylysine. Position 156 (Y156) interacts with substrate. A divalent metal cation-binding residues include H182 and H239. S286 is a substrate binding site. A divalent metal cation is bound at residue D313. Residue N335 coordinates substrate.

Belongs to the metallo-dependent hydrolases superfamily. Hydantoinase/dihydropyrimidinase family. In terms of assembly, homotetramer. A divalent metal cation is required as a cofactor. Carboxylation allows a single lysine to coordinate two divalent metal cations.

It catalyses the reaction D-5-phenylhydantoin + H2O = N-carbamoyl-D-phenylglycine + H(+). Its function is as follows. Catalyzes the stereospecific hydrolysis of the cyclic amide bond of D-hydantoin derivatives with an aromatic side chains at the 5'-position. Has no activity on dihydropyrimidines. The physiological function is unknown. The chain is D-phenylhydantoinase from Escherichia coli O17:K52:H18 (strain UMN026 / ExPEC).